The chain runs to 279 residues: Movement protein (279 aa).

This sequence belongs to the cucumovirus movement protein family.

The protein resides in the host cell junction. It is found in the host plasmodesma. Its function is as follows. Transports viral genome to neighboring plant cells directly through plasmosdesmata, without any budding. The movement protein allows efficient cell to cell propagation, by bypassing the host cell wall barrier. Acts by forming a tubular structure at the host plasmodesmata, enlarging it enough to allow free passage of virion capsids. This chain is Movement protein, found in Cucumber mosaic virus (strain Ixora) (CMV).